Here is a 437-residue protein sequence, read N- to C-terminus: UDP-N-acetylmuramate--L-alanine ligase (437 aa).

114 to 120 contacts ATP; it reads GTHGKTS.

Belongs to the MurCDEF family.

Its subcellular location is the cytoplasm. The catalysed reaction is UDP-N-acetyl-alpha-D-muramate + L-alanine + ATP = UDP-N-acetyl-alpha-D-muramoyl-L-alanine + ADP + phosphate + H(+). It functions in the pathway cell wall biogenesis; peptidoglycan biosynthesis. Its function is as follows. Cell wall formation. The protein is UDP-N-acetylmuramate--L-alanine ligase of Lactobacillus gasseri (strain ATCC 33323 / DSM 20243 / BCRC 14619 / CIP 102991 / JCM 1131 / KCTC 3163 / NCIMB 11718 / NCTC 13722 / AM63).